A 507-amino-acid chain; its full sequence is Cyclic GMP-AMP synthase (507 aa).

Residues 1 to 146 are DNA-binding; it reads MEDPRRRTTA…PRAPRGSRKE (146 aa). Residues 1-151 are disordered; sequence MEDPRRRTTA…GSRKEPDKLK (151 aa). Residues 7–18 show a composition bias toward basic residues; that stretch reads RTTAPRAKKPSA. Over residues 44–57 the composition is skewed to basic and acidic residues; that stretch reads RRAERDGDTTEKPR. Residues 48 to 59 are required for association with the cell membrane; that stretch reads RDGDTTEKPRAP. Phosphothreonine is present on T52. Residues 119 to 132 form a required for activation upon DNA viral infection region; the sequence is RKVVRGPSHRRGAR. Positions 121 to 131 are enriched in basic residues; it reads VVRGPSHRRGA. A Nuclear export signal motif is present at residues 154 to 159; that stretch reads LDKLRL. K156 carries the post-translational modification N6-lactoyllysine. Residues 158 to 201 form a DNA-binding region; sequence RLKRKDISEAAETVNKVVERLLRRMQKRESEFKGVEQLNTGSYY. The residue at position 176 (E176) is a PolyADP-ribosyl glutamic acid. T197 contributes to the GTP binding site. S199 lines the ATP pocket. S199 is subject to Phosphoserine. Y201 carries the phosphotyrosine modification. The Mg(2+) site is built by E211 and D213. D213 is a binding site for 2',3'-cGAMP. Residue K217 forms a Glycyl lysine isopeptide (Lys-Gly) (interchain with G-Cter in SUMO) linkage. K271 participates in a covalent cross-link: Glycyl lysine isopeptide (Lys-Gly) (interchain with G-Cter in ubiquitin). E272 bears the 5-glutamyl polyglutamate mark. The Nuclear localization signal motif lies at 281-291; the sequence is DVSVEKEKPGS. G290 is a binding site for 2',3'-cGAMP. S291 is modified (phosphoserine; by CDK1 and PKB). E302 carries the 5-glutamyl glutamate modification. D307 is a binding site for GTP. D307 contacts Mg(2+). Residue D307 participates in 2',3'-cGAMP binding. The interval 329–370 is interaction with collided ribosomes; the sequence is QGWLGTKVRTNLRREPFYLVPKNAKDGNSFQGETWRLSFSHT. K335 participates in a covalent cross-link: Glycyl lysine isopeptide (Lys-Gly) (interchain with G-Cter in SUMO); alternate. A Glycyl lysine isopeptide (Lys-Gly) (interchain with G-Cter in ubiquitin); alternate cross-link involves residue K335. Residues K350 and 364 to 366 each bind 2',3'-cGAMP; that span reads RLS. 364-371 is a binding site for GTP; sequence RLSFSHTE. E371 lines the ATP pocket. A Glycyl lysine isopeptide (Lys-Gly) (interchain with G-Cter in SUMO); alternate cross-link involves residue K372. A Glycyl lysine isopeptide (Lys-Gly) (interchain with G-Cter in ubiquitin); alternate cross-link involves residue K372. N6-acetyllysine is present on K372. The segment at 372-395 is DNA-binding; the sequence is KYILNNHGIEKTCCESSGAKCCRK. Zn(2+) is bound at residue H378. K382 participates in a covalent cross-link: Glycyl lysine isopeptide (Lys-Gly) (interchain with G-Cter in SUMO). The residue at position 382 (K382) is an N6-acetyllysine. The Zn(2+) site is built by C384, C385, and C392. Residues C392 and C393 are each lipidated (S-palmitoyl cysteine). Residues K399, K402, K409, and K410 each participate in a glycyl lysine isopeptide (Lys-Gly) (interchain with G-Cter in ubiquitin) cross-link. K402 serves as a coordination point for ATP. Residue K402 is modified to N6-acetyllysine. S420 carries the post-translational modification Phosphoserine. 420 to 424 contributes to the ATP binding site; sequence SYHVK. A lipid anchor (S-palmitoyl cysteine) is attached at C459. A Glycyl lysine isopeptide (Lys-Gly) (interchain with G-Cter in SUMO); alternate cross-link involves residue K464. K464 participates in a covalent cross-link: Glycyl lysine isopeptide (Lys-Gly) (interchain with G-Cter in ubiquitin); alternate. N6-methyllysine is present on K491.

This sequence belongs to the mab-21 family. Monomer in the absence of DNA. Homodimer in presence of dsDNA: forms a 2:2 dimer with two enzymes binding to two DNA molecules. Interacts with nucleosomes; interaction is mainly mediated via histones H2A and H2B and inactivates the nucleotidyltransferase activity by blocking DNA-binding and subsequent activation. Interacts with PQBP1 (via WW domain). Interacts with TRIM14; this interaction recruits USP14, leading to deubiquitinate and stabilize CGAS and promote type I interferon production. Interacts with ZCCHC3; promoting sensing of dsDNA by CGAS. Interacts (when not monomethylated) with (poly-ADP-ribosylated) PARP1; interaction takes place in the nucleus and prevents the formation of the PARP1-TIMELESS complex. Interacts (when monomethylated) with SGF29; interaction with SGF29 prevents interaction with PARP1. Interacts with PCBP2; preventing the formation of liquid-like droplets in which CGAS is activated. Interacts with Irgm1; promoting CGAS degradation. Interacts with DDX41. The cofactor is Mg(2+). Mn(2+) serves as cofactor. Zn(2+) is required as a cofactor. In terms of processing, the N-terminal disordered part (1-146) is phosphorylated by AURKB during the G2-M transition, blocking CGAS liquid phase separation and preventing activation. Phosphorylation at Tyr-201 by BLK promotes cytosolic retention. Localizes into the nucleus following dephosphorylation at Tyr-201. Phosphorylation at Ser-420 activates the nucleotidyltransferase activity. Dephosphorylation at Ser-420 by PPP6C impairs its ability to bind GTP, thereby inactivating it. Phosphorylation at Thr-52 and Ser-199 by PRKDC inhibits its cyclic GMP-AMP synthase activity by impairing homodimerization and activation. Phosphorylation at Ser-291 by AKT (AKT1, AKT2 or AKT3) suppresses the nucleotidyltransferase activity. Phosphorylation at Ser-291 by CDK1 during mitosis leads to its inhibition, thereby preventing CGAS activation by self-DNA during mitosis. Dephosphorylated at Ser-291 by protein phosphatase PP1 upon mitotic exit. Ubiquitinated at Lys-402 via 'Lys-48'-linked polyubiquitin chains, leading to its SQSTM1-mediated autophagic degradation. Interaction with TRIM14 promotes recruitment of USP14, leading to deubiquitinate Lys-402 and stabilize CGAS. Ubiquitinated at Lys-372 by RNF185 via 'Lys-27'-linked polyubiquitination, promoting CGAS cyclic GMP-AMP synthase activity. Monoubiquitination at Lys-335 by TRIM56 promotes oligomerization and subsequent activation. Monoubiquitination by TRIM41 promotes CGAS activation. Ubiquitination at Lys-271 and Lys-464 via 'Lys-48'-linked polyubiquitination promotes its degradation. Deubiquitination at Lys-271 by USP29 promotes its stabilization. Deubiquitinated by USP27X, promoting its stabilization. Ubiquitinated at Lys-399 via 'Lys-63'-linked polyubiquitin chains by MARCHF8, leading to the inhibition of its DNA binding ability. In cycling cells, nucleosome-bound CGAS is ubiquitinated at Lys-409 and Lys-410 via 'Lys-48'-linked polyubiquitin chains by the ECS(SPSB3) complex, leading to its degradation: ubiquitination and degradation of nuclear CGAS during G1 and G2 phases is required to promote low intranuclear CGAS abundance before the next mitotic cycle. Post-translationally, sumoylated at Lys-217 and Lys-464 by TRIM38 in uninfected cells and during the early phase of viral infection, promoting its stability by preventing ubiquitination at Lys-271 and Lys-464, and subsequent degradation. Desumoylated by SENP2 during the late phase of viral infection. Sumoylation at Lys-335, Lys-372 and Lys-382 prevents DNA-binding, oligomerization and nucleotidyltransferase activity. Desumoylation at Lys-335, Lys-372 and Lys-382 by SENP7 relieves inhibition and activates CGAS. In terms of processing, polyglutamylated by TTLL6 at Glu-272, leading to impair DNA-binding activity. Monoglutamylated at Glu-302 by TTLL4, leading to impair the nucleotidyltransferase activity. Deglutamylated by AGBL5/CCP5 and AGBL6/CCP6. Acetylation at Lys-372, Lys-382 and Lys-402 inhibits the cyclic GMP-AMP synthase activity. Deacetylated upon cytosolic DNA challenge such as viral infections. Acetylation by KAT5 increases the cyclic GMP-AMP synthase activity by promoting DNA-binding and subsequent activation. Post-translationally, proteolytically cleaved by apoptotic caspases during apoptosis, leading to its inactivation. The damage of the nucleus and the mitochondria during apoptosis leads to leakage of nuclear and mitochondrial DNA, which activate CGAS: cleavage and inactivation during apoptosis in required to prevent cytokine overproduction. Cleaved by CASP7 and CASP3 during virus-induced apoptosis, thereby inactivating it and preventing cytokine overproduction. Cleaved by CASP1 upon DNA virus infection; the cleavage impairs cGAMP production. Also cleaved by the pyroptotic CASP4 during non-canonical inflammasome activation; does not cut at the same sites than CASP1. In terms of processing, degraded via selective autophagy following interaction with Irgm1. Irgm1 promotes CGAS recruitment to autophagosome membranes, promoting its SQSTM1/p62-dependent autophagic degradation. Poly-ADP-ribosylation at Glu-176 by PARP1 impairs DNA-binding, thereby preventing the cyclic GMP-AMP synthase activity. Post-translationally, palmitoylation at Cys-459 by ZDHHC18 impairs DNA-binding, thereby preventing the cyclic GMP-AMP synthase activity. Palmitoylation at Cys-392 and Cys-393 by ZDHHC9 promotes homodimerization and cyclic GMP-AMP synthase activity. Depalmitoylation at Cys-392 and Cys-393 by LYPLAL1 impairs homodimerization and cyclic GMP-AMP synthase activity. In terms of processing, monomethylated at Lys-491 by SETD7. Monomethylation promotes interaction with SGF29, preventing interaction between PARP1 nad SGF29. Demethylation by RIOX1 promotes interaction with PARP1, followed by PARP1 inactivation. Lactylation by AARS2 prevents ability to undergo liquid-liquid phase separation (LLPS), thereby inhibiting CGAS activation.

The protein localises to the nucleus. It is found in the chromosome. It localises to the cell membrane. Its subcellular location is the cytoplasm. The protein resides in the cytosol. It catalyses the reaction GTP + ATP = 2',3'-cGAMP + 2 diphosphate. The enzyme catalyses GTP + ATP = pppGp(2'-5')A + diphosphate. The catalysed reaction is pppGp(2'-5')A = 2',3'-cGAMP + diphosphate. With respect to regulation, the enzyme activity is strongly increased by double-stranded DNA (dsDNA), but not by single-stranded DNA or RNA. DNA-binding induces the formation of liquid-like droplets in which CGAS is activated. Liquid-like droplets also create a selective environment that restricts entry of negative regulators, such as TREX1 or BANF1/BAF, allowing sensing of DNA. A number of mechanisms exist to restrict its activity toward self-DNA. The nucleotidyltransferase activity is inhibited in the nucleus via its association with nucleosomes: interacts with the acidic patch of histones H2A and H2B, thereby blocking DNA-binding and subsequent activation. CGAS is also inactive when associated with mitotic chromatin. Chromatin-bound CGAS cannot be activated by exogenous DNA in mitotic cells: phosphorylation of the N-terminal disordered part by AURKB during the G2-M transition blocks CGAS liquid phase separation and activation. Activity toward self-DNA is inhibited by BANF1/BAF upon acute loss of nuclear membrane integrity: BANF1/BAF acts by outcompeting CGAS for DNA-binding, thereby preventing CGAS activation. DNA-induced activation at micronuclei is also limited by TREX1, which degrades micronuclear DNA upon nuclear envelope rupture, thereby preventing CGAS activation. CGAS can be released from nucleosomes and activated by MRE11 component of the MRN complex, which displaces CGAS from acidic-patch-mediated sequestration. Acetylation at Lys-372, Lys-382 and Lys-402 inhibits the cyclic GMP-AMP synthase activity. Acetylation by KAT5 increases the cyclic GMP-AMP synthase activity by promoting DNA-binding and subsequent activation. Phosphorylation at Ser-291 suppresses the nucleotidyltransferase activity. Phosphorylation at Ser-420 promotes the cyclic GMP-AMP synthase activity. Phosphorylation at Thr-52 and Ser-199 inhibits its cyclic GMP-AMP synthase activity. Ubiquitination at Lys-372 via 'Lys-27'-linked polyubiquitination enhances the cyclic GMP-AMP synthase activity. Monoubiquitination at Lys-335 promotes oligomerization and subsequent activation. Sumoylation at Lys-335, Lys-372 and Lys-382 prevents DNA-binding, oligomerization and nucleotidyltransferase activity. The enzyme activity is impaired by the cleavage by CASP1. In addition to DNA, also activated by collided ribosomes upon translation stress: specifically binds collided ribosomes, promoting its activation and triggering type-I interferon production. In hematopoietic stem cells, binding to circular RNA cia-cGAS inhibits the cyclic GMP-AMP synthase activity. Strongly inhibited by compound RU.521, which is specific for mouse protein. Nucleotidyltransferase that catalyzes the formation of cyclic GMP-AMP (2',3'-cGAMP) from ATP and GTP and plays a key role in innate immunity. Catalysis involves both the formation of a 2',5' phosphodiester linkage at the GpA step and the formation of a 3',5' phosphodiester linkage at the ApG step, producing c[G(2',5')pA(3',5')p]. Acts as a key DNA sensor: directly binds double-stranded DNA (dsDNA), inducing the formation of liquid-like droplets in which CGAS is activated, leading to synthesis of 2',3'-cGAMP, a second messenger that binds to and activates STING1, thereby triggering type-I interferon production. Preferentially binds long dsDNA (around 45 bp) and forms ladder-like networks that function cooperatively to stabilize individual cGAS-dsDNA complexes. Acts as a key foreign DNA sensor, the presence of double-stranded DNA (dsDNA) in the cytoplasm being a danger signal that triggers the immune responses. Has antiviral activity by sensing the presence of dsDNA from DNA viruses in the cytoplasm. Also acts as an innate immune sensor of infection by retroviruses by detecting the presence of reverse-transcribed DNA in the cytosol. Detection of retroviral reverse-transcribed DNA in the cytosol may be indirect and be mediated via interaction with PQBP1, which directly binds reverse-transcribed retroviral DNA. Also detects the presence of DNA from bacteria. 2',3'-cGAMP can be transferred from producing cells to neighboring cells through gap junctions, leading to promote STING1 activation and convey immune response to connecting cells. 2',3'-cGAMP can also be transferred between cells by virtue of packaging within viral particles contributing to IFN-induction in newly infected cells in a cGAS-independent but STING1-dependent manner. Also senses the presence of neutrophil extracellular traps (NETs) that are translocated to the cytosol following phagocytosis, leading to synthesis of 2',3'-cGAMP. In addition to foreign DNA, can also be activated by endogenous nuclear or mitochondrial DNA. When self-DNA leaks into the cytosol during cellular stress (such as mitochondrial stress, DNA damage, mitotic arrest or senescence), or is present in form of cytosolic micronuclei, CGAS is activated leading to a state of sterile inflammation. Acts as a regulator of cellular senescence by binding to cytosolic chromatin fragments that are present in senescent cells, leading to trigger type-I interferon production via STING1 and promote cellular senescence. Also involved in the inflammatory response to genome instability and double-stranded DNA breaks: acts by localizing to micronuclei arising from genome instability. Micronuclei, which as frequently found in cancer cells, consist of chromatin surrounded by its own nuclear membrane: following breakdown of the micronuclear envelope, a process associated with chromothripsis, CGAS binds self-DNA exposed to the cytosol, leading to 2',3'-cGAMP synthesis and subsequent activation of STING1 and type-I interferon production. In a healthy cell, CGAS is however kept inactive even in cellular events that directly expose it to self-DNA, such as mitosis, when cGAS associates with chromatin directly after nuclear envelope breakdown or remains in the form of postmitotic persistent nuclear cGAS pools bound to chromatin. Nuclear CGAS is inactivated by chromatin via direct interaction with nucleosomes, which block CGAS from DNA binding and thus prevent CGAS-induced autoimmunity. Also acts as a suppressor of DNA repair in response to DNA damage: inhibits homologous recombination repair by interacting with PARP1, the CGAS-PARP1 interaction leading to impede the formation of the PARP1-TIMELESS complex. In addition to DNA, also sense translation stress: in response to translation stress, translocates to the cytosol and associates with collided ribosomes, promoting its activation and triggering type-I interferon production. This Mus musculus (Mouse) protein is Cyclic GMP-AMP synthase.